Consider the following 142-residue polypeptide: Relaxin-3 (142 aa).

An N-terminal signal peptide occupies residues 1-25 (MARYMLLLLLAVWVLTGELWPGAEA). 3 disulfide bridges follow: cysteine 35-cysteine 129, cysteine 47-cysteine 142, and cysteine 128-cysteine 133. A propeptide spans 55–118 (SDILAHEAMG…GTPGVLRGSR (64 aa)) (connecting peptide).

This sequence belongs to the insulin family. Heterodimer of a B chain and an A chain linked by two disulfide bonds.

It localises to the secreted. Its function is as follows. May play a role in neuropeptide signaling processes. Ligand for LGR7, RXFP3 and RXFP4. In Homo sapiens (Human), this protein is Relaxin-3 (RLN3).